A 259-amino-acid polypeptide reads, in one-letter code: DNA-directed RNA polymerase subunit Rpo3 (259 aa).

This sequence belongs to the archaeal Rpo3/eukaryotic RPB3 RNA polymerase subunit family. In terms of assembly, part of the RNA polymerase complex.

It localises to the cytoplasm. It catalyses the reaction RNA(n) + a ribonucleoside 5'-triphosphate = RNA(n+1) + diphosphate. Its function is as follows. DNA-dependent RNA polymerase (RNAP) catalyzes the transcription of DNA into RNA using the four ribonucleoside triphosphates as substrates. In Pyrococcus horikoshii (strain ATCC 700860 / DSM 12428 / JCM 9974 / NBRC 100139 / OT-3), this protein is DNA-directed RNA polymerase subunit Rpo3.